Consider the following 169-residue polypeptide: Lipoprotein signal peptidase (169 aa).

3 consecutive transmembrane segments (helical) span residues 12–32 (WLWL…WILG), 70–90 (WFFA…MYRS), and 102–122 (AFII…GFVV). Catalysis depends on residues Asp-123 and Asp-141. Residues 137–157 (FNLADSFICVGAAMIVLEGFL) traverse the membrane as a helical segment.

It belongs to the peptidase A8 family.

The protein localises to the cell inner membrane. The enzyme catalyses Release of signal peptides from bacterial membrane prolipoproteins. Hydrolyzes -Xaa-Yaa-Zaa-|-(S,diacylglyceryl)Cys-, in which Xaa is hydrophobic (preferably Leu), and Yaa (Ala or Ser) and Zaa (Gly or Ala) have small, neutral side chains.. It participates in protein modification; lipoprotein biosynthesis (signal peptide cleavage). Functionally, this protein specifically catalyzes the removal of signal peptides from prolipoproteins. In Serratia proteamaculans (strain 568), this protein is Lipoprotein signal peptidase.